A 298-amino-acid chain; its full sequence is UDP-N-acetylenolpyruvoylglucosamine reductase (298 aa).

Residues 27-206 (VGGPAQRLYR…QQQIRRLLRQ (180 aa)) enclose the FAD-binding PCMH-type domain. Residue R171 is part of the active site. S220 acts as the Proton donor in catalysis. E290 is a catalytic residue.

The protein belongs to the MurB family. It depends on FAD as a cofactor.

The protein localises to the cytoplasm. It carries out the reaction UDP-N-acetyl-alpha-D-muramate + NADP(+) = UDP-N-acetyl-3-O-(1-carboxyvinyl)-alpha-D-glucosamine + NADPH + H(+). The protein operates within cell wall biogenesis; peptidoglycan biosynthesis. Cell wall formation. In Nitrosococcus oceani (strain ATCC 19707 / BCRC 17464 / JCM 30415 / NCIMB 11848 / C-107), this protein is UDP-N-acetylenolpyruvoylglucosamine reductase.